A 654-amino-acid chain; its full sequence is Phosphate transport system permease protein PstA homolog (654 aa).

The next 12 helical transmembrane spans lie at 22 to 42, 64 to 84, 113 to 133, 143 to 163, 266 to 286, 303 to 323, 368 to 388, 417 to 437, 453 to 473, 486 to 506, 535 to 555, and 613 to 633; these read LAFLFLVLFISFFVFLLTEAT, AGIWFPLLVSFIVSIGALIIA, ILSGIPSVIFGLFASQILSIF, LSLLNVIAMLSFMIIPIVISL, VLYIFGIIILILVSLLNFFAI, ISNFIYQVVWFIPNNISALFV, ELICTFLAFGFVLAILLFVFI, LVIILITITITFPLALLIAIW, FVIDSLSSMPSIIYGLFGLSF, NGTSLIAGILTISVVILLFLI, IFKIVLPSALKGLIVALILSI, and VVFLILLIFFSSYLIPSLFLL. The ABC transmembrane type-1 1 domain occupies 70–285; the sequence is LLVSFIVSIG…ILVSLLNFFA (216 aa). Positions 413–623 constitute an ABC transmembrane type-1 2 domain; sequence LVNTLVIILI…VFLILLIFFS (211 aa).

This sequence belongs to the binding-protein-dependent transport system permease family. CysTW subfamily.

The protein localises to the cell membrane. In terms of biological role, could be part of a binding-protein-dependent transport system for phosphate; probably responsible for the translocation of the substrate across the membrane. The chain is Phosphate transport system permease protein PstA homolog (pstA) from Mycoplasma genitalium (strain ATCC 33530 / DSM 19775 / NCTC 10195 / G37) (Mycoplasmoides genitalium).